The primary structure comprises 107 residues: Ig kappa chain V region 4135 (107 aa).

The framework-1 stretch occupies residues 1–24 (ADIVMTQTPASVSEPVGGTVTIKC). The interval 25 to 35 (QTSQSIDDYLS) is complementarity-determining-1. The tract at residues 36 to 50 (WYQQKPGQPPKGLIY) is framework-2. The interval 51-57 (RASTLAS) is complementarity-determining-2. The framework-3 stretch occupies residues 58–89 (GVPSRFRGSGSGTDFTLTISDLECADAATYYC). Residues 90–96 (QSTYGVG) form a complementarity-determining-3 region. The framework-4 stretch occupies residues 97-106 (FGGGTEVVVK).

This Oryctolagus cuniculus (Rabbit) protein is Ig kappa chain V region 4135.